We begin with the raw amino-acid sequence, 201 residues long: Ras-related protein Rab-9A (201 aa).

An N-acetylalanine modification is found at A2. GTP-binding residues include G17, V18, G19, K20, S21, S22, S34, H38, and T39. S21 contributes to the Mg(2+) binding site. The Switch 1 motif lies at 31 to 42 (KFDSQLFHTIGV). S34 bears the Phosphoserine mark. Positions 39 and 62 each coordinate Mg(2+). The Switch 2 motif lies at 64-78 (AGQERFRSLRTPFYR). GTP is bound by residues G65, N124, K125, D127, and K156. S179 bears the Phosphoserine mark. At T187 the chain carries Phosphothreonine. S-geranylgeranyl cysteine attachment occurs at residues C200 and C201.

The protein belongs to the small GTPase superfamily. Rab family. Interacts (preferentially in its GTP-bound form) with GCC2 (via its GRIP domain). Interacts (GTP-bound form) with SGSM1; the GDP-bound form has much lower affinity for SGSM1. Interacts with SGSM2. The GTP-bound form but not the GDP-bound form interacts with HPS4 and the BLOC-3 complex (heterodimer of HPS1 and HPS4) but does not interact with HPS1 alone. Interacts (GTP-bound form) with NDE1; two RAB9A-GTP molecules lie on the opposite sides of the NDE1 homodimer; the interaction leads to RAB9A-dynein motor tethering. Interacts (GTP-bound form) with NDEL1. It depends on Mg(2+) as a cofactor.

The protein localises to the cell membrane. It localises to the endoplasmic reticulum membrane. The protein resides in the golgi apparatus membrane. Its subcellular location is the late endosome. It is found in the cytoplasmic vesicle. The protein localises to the phagosome membrane. It localises to the phagosome. The protein resides in the cytoplasmic vesicle membrane. Its subcellular location is the melanosome. The enzyme catalyses GTP + H2O = GDP + phosphate + H(+). Its activity is regulated as follows. Regulated by guanine nucleotide exchange factors (GEFs) which promote the exchange of bound GDP for free GTP. Regulated by GTPase activating proteins (GAPs) which increase the GTP hydrolysis activity. Inhibited by GDP dissociation inhibitors (GDIs). In terms of biological role, the small GTPases Rab are key regulators of intracellular membrane trafficking, from the formation of transport vesicles to their fusion with membranes. Rabs cycle between an inactive GDP-bound form and an active GTP-bound form that is able to recruit to membranes different sets of downstream effectors directly responsible for vesicle formation, movement, tethering and fusion. RAB9A is involved in the transport of proteins between the endosomes and the trans-Golgi network (TGN). Specifically uses NDE1/NDEL1 as an effector to interact with the dynein motor complex in order to control retrograde trafficking of RAB9-associated late endosomes to the TGN. Involved in the recruitment of SGSM2 to melanosomes and is required for the proper trafficking of melanogenic enzymes TYR, TYRP1 and DCT/TYRP2 to melanosomes in melanocytes. The protein is Ras-related protein Rab-9A of Rattus norvegicus (Rat).